The chain runs to 780 residues: ATP-dependent 6-phosphofructokinase, muscle type (780 aa).

The residue at position 2 (Thr-2) is an N-acetylthreonine. An N-terminal catalytic PFK domain 1 region spans residues 2 to 390; sequence THEEHHAART…NWEVYKLLAH (389 aa). ATP contacts are provided by residues Gly-25, 88 to 89, and 118 to 121; these read RC and GDGS. Residue Asp-119 participates in Mg(2+) binding. Position 133 is a phosphoserine (Ser-133). Substrate contacts are provided by residues 164–166, Arg-201, 208–210, Glu-264, Arg-292, and 298–301; these read SID, MGR, and HVQR. The active-site Proton acceptor is the Asp-166. Ser-377 is subject to Phosphoserine. An interdomain linker region spans residues 391-401; it reads IRPPAPKSGSY. The tract at residues 402–780 is C-terminal regulatory PFK domain 2; that stretch reads TVAVMNVGAP…SRKRSGEATV (379 aa). Residues Arg-471 and 528-532 each bind beta-D-fructose 2,6-bisphosphate; that span reads TVSNN. Ser-530 carries an O-linked (GlcNAc) serine glycan. The residue at position 557 (Lys-557) is an N6-(2-hydroxyisobutyryl)lysine. Beta-D-fructose 2,6-bisphosphate is bound by residues Arg-566, 573 to 575, Glu-629, Arg-655, and 661 to 664; these read MGG and HMQQ. The residue at position 667 (Ser-667) is a Phosphoserine. Arg-735 is a binding site for beta-D-fructose 2,6-bisphosphate. Ser-775 carries the phosphoserine; by PKA modification.

This sequence belongs to the phosphofructokinase type A (PFKA) family. ATP-dependent PFK group I subfamily. Eukaryotic two domain clade 'E' sub-subfamily. Homo- and heterotetramers. Phosphofructokinase (PFK) enzyme functions as a tetramer composed of different combinations of 3 types of subunits, called PFKM (M), PFKL (L) and PFKP (P). The composition of the PFK tetramer differs according to the tissue type it is present in. The kinetic and regulatory properties of the tetrameric enzyme are dependent on the subunit composition, hence can vary across tissues. Interacts (via C-terminus) with HK1 (via N-terminal spermatogenic cell-specific region). Mg(2+) is required as a cofactor. Post-translationally, glcNAcylation decreases enzyme activity.

It is found in the cytoplasm. It carries out the reaction beta-D-fructose 6-phosphate + ATP = beta-D-fructose 1,6-bisphosphate + ADP + H(+). Its pathway is carbohydrate degradation; glycolysis; D-glyceraldehyde 3-phosphate and glycerone phosphate from D-glucose: step 3/4. Its activity is regulated as follows. Allosterically activated by ADP, AMP, or fructose 2,6-bisphosphate, and allosterically inhibited by ATP or citrate. In terms of biological role, catalyzes the phosphorylation of D-fructose 6-phosphate to fructose 1,6-bisphosphate by ATP, the first committing step of glycolysis. This Oryctolagus cuniculus (Rabbit) protein is ATP-dependent 6-phosphofructokinase, muscle type (PFKM).